The following is a 240-amino-acid chain: Bidirectional sugar transporter SWEET7c (240 aa).

Residues 1 to 12 (MVSPDLIRNVVG) lie on the Extracellular side of the membrane. The region spanning 10–48 (VVGIVGNVISFGLFLSPVPIFWWIIKNKNVQNFKADPIL) is the MtN3/slv 1 domain. Residues 13–33 (IVGNVISFGLFLSPVPIFWWI) traverse the membrane as a helical segment. Over 34–46 (IKNKNVQNFKADP) the chain is Cytoplasmic. The helical transmembrane segment at 47–67 (ILVVTINGISLVIEAVYLTIF) threads the bilayer. Residues 68–78 (FLFSDKKNKKK) are Extracellular-facing. Residues 79-99 (MGVVLATEALFMAAVAVGVLL) form a helical membrane-spanning segment. Residues 100 to 108 (GAHTHQRRS) are Cytoplasmic-facing. The chain crosses the membrane as a helical span at residues 109-129 (LIVGILCVIFGTIMYSSPLTI). In terms of domain architecture, MtN3/slv 2 spans 110-191 (IVGILCVIFG…LILYAIYYRT (82 aa)). The Extracellular segment spans residues 130–140 (MVVKTKSVEYM). A helical membrane pass occupies residues 141–161 (PLLLSVVSFLNGLCWTLYALI). Over 162 to 164 (RFD) the chain is Cytoplasmic. A helical membrane pass occupies residues 165 to 185 (IFITIPNGLGVLFAIMQLILY). The Extracellular portion of the chain corresponds to 186 to 240 (AIYYRTTPKKQDKNLELPTVAPIAKDTSIVAPVGNDDDVNGSTASHATINITIEP). 2 N-linked (GlcNAc...) asparagine glycosylation sites follow: asparagine 225 and asparagine 235.

It belongs to the SWEET sugar transporter family. Forms homooligomers and/or heterooligomers.

The protein localises to the cell membrane. Its function is as follows. Mediates both low-affinity uptake and efflux of sugar across the plasma membrane. The polypeptide is Bidirectional sugar transporter SWEET7c (SWEET7C) (Oryza sativa subsp. indica (Rice)).